The chain runs to 359 residues: Peptide chain release factor 1 (359 aa).

At glutamine 236 the chain carries N5-methylglutamine.

The protein belongs to the prokaryotic/mitochondrial release factor family. Post-translationally, methylated by PrmC. Methylation increases the termination efficiency of RF1.

Its subcellular location is the cytoplasm. In terms of biological role, peptide chain release factor 1 directs the termination of translation in response to the peptide chain termination codons UAG and UAA. In Streptococcus thermophilus (strain ATCC BAA-250 / LMG 18311), this protein is Peptide chain release factor 1.